The following is a 147-amino-acid chain: Shadow of prion protein (147 aa).

The first 24 residues, 1-24 (MNWTAATCWALLLAAAFLCDSCSA), serve as a signal peptide directing secretion. Positions 26–43 (GGRGGARGSARGVRGGAR) are enriched in gly residues. Residues 26 to 45 (GGRGGARGSARGVRGGARGA) are disordered. Asparagine 107 carries an N-linked (GlcNAc...) asparagine glycan. Glycine 122 is lipidated: GPI-anchor amidated glycine. A propeptide spans 123 to 147 (SGSVHSPRICLLLGGTLGALELLRP) (removed in mature form).

It belongs to the SPRN family. Post-translationally, N-glycosylated. In terms of tissue distribution, mainly expressed in brain (at protein level). In brain, it is highly expressed in the hippocampus and cerebellum and is also expressed at lower level in other areas of the brain including the cerebral cortex, the thalamus and the medulla. In hippocampus and cerebellum it is highly expressed in the cell bodies of pyramidal cells and Purkinje cells, respectively.

The protein localises to the cell membrane. Functionally, prion-like protein that has PrP(C)-like neuroprotective activity. May act as a modulator for the biological actions of normal and abnormal PrP. The sequence is that of Shadow of prion protein (Sprn) from Mus musculus (Mouse).